Consider the following 221-residue polypeptide: MAVFIGATGTDIGKTLFSSLILGKYGKSLGLKYFKPVQTGNDSDRVTLMNLTGLHESYFLKNYYSLSFAGSPHYASELEGVEIDSDELSRHLYSIRDEKIIVEGAGGLLVPLTRKILTLELVRQSEIPLILVAPVSLGAINQTLLAIEAVQNRKIDLKGIYFIGIPDKTTEDNIRTITEWSGVTLLGNFFLNSKEKMSRERFQIECLSRFDQCEVIKKMFV.

Residue 11-16 coordinates ATP; that stretch reads DIGKTL. Residue Thr-15 coordinates Mg(2+). Lys-35 is an active-site residue. Thr-39 contacts substrate. Residues Asp-44 and 103–106 contribute to the ATP site; that span reads EGAG. Mg(2+) contacts are provided by Asp-44 and Glu-103.

The protein belongs to the dethiobiotin synthetase family. In terms of assembly, homodimer. Requires Mg(2+) as cofactor.

It localises to the cytoplasm. The catalysed reaction is (7R,8S)-7,8-diammoniononanoate + CO2 + ATP = (4R,5S)-dethiobiotin + ADP + phosphate + 3 H(+). It participates in cofactor biosynthesis; biotin biosynthesis; biotin from 7,8-diaminononanoate: step 1/2. In terms of biological role, catalyzes a mechanistically unusual reaction, the ATP-dependent insertion of CO2 between the N7 and N8 nitrogen atoms of 7,8-diaminopelargonic acid (DAPA, also called 7,8-diammoniononanoate) to form a ureido ring. This Leptospira borgpetersenii serovar Hardjo-bovis (strain L550) protein is ATP-dependent dethiobiotin synthetase BioD.